Consider the following 397-residue polypeptide: tRNA-specific 2-thiouridylase MnmA (397 aa).

ATP is bound by residues 6 to 13 and Leu32; that span reads AMSGGVDS. Cys101 serves as the catalytic Nucleophile. Cys101 and Cys199 form a disulfide bridge. ATP is bound at residue Gly125. The segment at 148-150 is interaction with tRNA; sequence KDQ. The Cysteine persulfide intermediate role is filled by Cys199.

Belongs to the MnmA/TRMU family.

The protein resides in the cytoplasm. The enzyme catalyses S-sulfanyl-L-cysteinyl-[protein] + uridine(34) in tRNA + AH2 + ATP = 2-thiouridine(34) in tRNA + L-cysteinyl-[protein] + A + AMP + diphosphate + H(+). Its function is as follows. Catalyzes the 2-thiolation of uridine at the wobble position (U34) of tRNA, leading to the formation of s(2)U34. This is tRNA-specific 2-thiouridylase MnmA from Clavibacter sepedonicus (Clavibacter michiganensis subsp. sepedonicus).